The sequence spans 254 residues: Putative electron transfer flavoprotein subunit YdiQ (254 aa).

It belongs to the ETF beta-subunit/FixA family. In terms of assembly, ydiR and YdiQ form a heterodimer.

Functionally, may play a role in a redox process. This chain is Putative electron transfer flavoprotein subunit YdiQ (ydiQ), found in Escherichia coli (strain K12).